Consider the following 287-residue polypeptide: Elongation factor Ts (287 aa).

Residues 80-83 are involved in Mg(2+) ion dislocation from EF-Tu; it reads TDFL.

It belongs to the EF-Ts family.

The protein resides in the cytoplasm. Its function is as follows. Associates with the EF-Tu.GDP complex and induces the exchange of GDP to GTP. It remains bound to the aminoacyl-tRNA.EF-Tu.GTP complex up to the GTP hydrolysis stage on the ribosome. This chain is Elongation factor Ts, found in Pseudomonas syringae pv. tomato (strain ATCC BAA-871 / DC3000).